Reading from the N-terminus, the 535-residue chain is CTP synthase (535 aa).

The tract at residues 1–268 (MSTKYIFVTG…DQIVCDHLKL (268 aa)) is amidoligase domain. Serine 14 is a binding site for CTP. Serine 14 serves as a coordination point for UTP. 15-20 (SMGKGI) serves as a coordination point for ATP. Tyrosine 55 is an L-glutamine binding site. ATP is bound at residue aspartate 72. Mg(2+) is bound by residues aspartate 72 and glutamate 142. CTP contacts are provided by residues 149 to 151 (DME), 189 to 194 (KTKIAQ), and lysine 225. UTP contacts are provided by residues 189 to 194 (KTKIAQ) and lysine 225. Valine 243 serves as a coordination point for ATP. The region spanning 293–535 (KIALVGKYVE…FIRVAVENSK (243 aa)) is the Glutamine amidotransferase type-1 domain. Glycine 355 contacts L-glutamine. Cysteine 382 acts as the Nucleophile; for glutamine hydrolysis in catalysis. L-glutamine-binding positions include 383–386 (LGMQ), glutamate 406, and arginine 464. Catalysis depends on residues histidine 509 and glutamate 511.

This sequence belongs to the CTP synthase family. As to quaternary structure, homotetramer. In contrast to E.coli CTP synthase, remains a tetramer at dilute enzyme concentrations even in the absence of Mg(2+), ATP and UTP.

It carries out the reaction UTP + L-glutamine + ATP + H2O = CTP + L-glutamate + ADP + phosphate + 2 H(+). The catalysed reaction is L-glutamine + H2O = L-glutamate + NH4(+). The enzyme catalyses UTP + NH4(+) + ATP = CTP + ADP + phosphate + 2 H(+). The protein operates within pyrimidine metabolism; CTP biosynthesis via de novo pathway; CTP from UDP: step 2/2. Its activity is regulated as follows. Allosterically activated by GTP, when glutamine is the substrate. GTP has no effect on the reaction when ammonia is the substrate. The allosteric effector GTP functions by stabilizing the protein conformation that binds the tetrahedral intermediate(s) formed during glutamine hydrolysis. Also activated by magnesium. Allosterically inhibited by CTP. Catalyzes the ATP-dependent amination of UTP to CTP with either L-glutamine or ammonia as the source of nitrogen. Is essential for the synthesis of CTP de novo. Contrary to other bacterial CTP synthases, the lactococcal enzyme is also able to convert dUTP to dCTP, but this reaction may not play a significant physiological role. Regulates intracellular CTP levels through interactions with the four ribonucleotide triphosphates. This is CTP synthase from Lactococcus lactis subsp. cremoris (strain MG1363).